A 308-amino-acid chain; its full sequence is Methionyl-tRNA formyltransferase (308 aa).

A (6S)-5,6,7,8-tetrahydrofolate-binding site is contributed by 110-113 (SLLP).

Belongs to the Fmt family.

It catalyses the reaction L-methionyl-tRNA(fMet) + (6R)-10-formyltetrahydrofolate = N-formyl-L-methionyl-tRNA(fMet) + (6S)-5,6,7,8-tetrahydrofolate + H(+). Functionally, attaches a formyl group to the free amino group of methionyl-tRNA(fMet). The formyl group appears to play a dual role in the initiator identity of N-formylmethionyl-tRNA by promoting its recognition by IF2 and preventing the misappropriation of this tRNA by the elongation apparatus. This is Methionyl-tRNA formyltransferase from Mycobacterium sp. (strain KMS).